The sequence spans 775 residues: Mitochondrial intermediate peptidase (775 aa).

The N-terminal 28 residues, 1–28 (MIARPARDVLSSATKKQFRFRGCLAARH), are a transit peptide targeting the mitochondrion. Residue H558 coordinates Zn(2+). E559 is an active-site residue. The Zn(2+) site is built by H562 and H565.

It belongs to the peptidase M3 family. Zn(2+) serves as cofactor.

It is found in the mitochondrion matrix. It catalyses the reaction Release of an N-terminal octapeptide as second stage of processing of some proteins imported into the mitochondrion.. In terms of biological role, cleaves proteins, imported into the mitochondrion, to their mature size. While most mitochondrial precursor proteins are processed to the mature form in one step by mitochondrial processing peptidase (MPP), the sequential cleavage by MIP of an octapeptide after initial processing by MPP is a required step for a subgroup of nuclear-encoded precursor proteins destined for the matrix or the inner membrane. This Schizophyllum commune (Split gill fungus) protein is Mitochondrial intermediate peptidase (OCT1).